The following is a 251-amino-acid chain: 5'-nucleotidase SurE (251 aa).

A divalent metal cation contacts are provided by D8, D9, S39, and N91.

This sequence belongs to the SurE nucleotidase family. The cofactor is a divalent metal cation.

The protein localises to the cytoplasm. It carries out the reaction a ribonucleoside 5'-phosphate + H2O = a ribonucleoside + phosphate. Its function is as follows. Nucleotidase that shows phosphatase activity on nucleoside 5'-monophosphates. In Nitrosococcus oceani (strain ATCC 19707 / BCRC 17464 / JCM 30415 / NCIMB 11848 / C-107), this protein is 5'-nucleotidase SurE.